The sequence spans 907 residues: DNA (cytosine-5)-methyltransferase CMT3 (907 aa).

Positions 1–15 (MAPSSPSSAAAPTRT) are enriched in low complexity. Residues 1 to 154 (MAPSSPSSAA…RNAATRRPDE (154 aa)) are disordered. Residues 30–63 (ATDEPSTKRTRRPKAETKPRKKKDEVKEEEKPPM) show a composition bias toward basic and acidic residues. Residues 64 to 89 (EDDACGEEPDAEEMALGEEAEAEEAE) are compositionally biased toward acidic residues. Composition is skewed to basic and acidic residues over residues 115–124 (HGSDGDHDPE) and 131–140 (PAKEARDKWP). The region spanning 172-297 (TLYCLHDDVY…VAYSTFANIP (126 aa)) is the BAH domain. Residues 303 to 323 (SGSDTASDISSDDVDSSKGKV) are disordered. Residues 335-868 (ATLLDLYSGC…YSLGLAYQRE (534 aa)) form the SAM-dependent MTase C5-type domain. The region spanning 437–500 (FVVEKLAGIC…EGYRRKILPL (64 aa)) is the Chromo domain. Residue C513 is part of the active site.

This sequence belongs to the class I-like SAM-binding methyltransferase superfamily. C5-methyltransferase family.

The protein resides in the nucleus. The enzyme catalyses a 2'-deoxycytidine in DNA + S-adenosyl-L-methionine = a 5-methyl-2'-deoxycytidine in DNA + S-adenosyl-L-homocysteine + H(+). Involved in CpXpG DNA methylation. Plays a critical role in the maintenance of CpXpG DNA methylation and suppression of a wide spectrum of transposable element (TE) activities. Required for proper plant development in reproductive stage. The protein is DNA (cytosine-5)-methyltransferase CMT3 of Oryza sativa subsp. japonica (Rice).